Here is a 171-residue protein sequence, read N- to C-terminus: 3-hydroxydecanoyl-[acyl-carrier-protein] dehydratase (171 aa).

His70 is an active-site residue.

Belongs to the thioester dehydratase family. FabA subfamily. Homodimer.

It localises to the cytoplasm. The catalysed reaction is a (3R)-hydroxyacyl-[ACP] = a (2E)-enoyl-[ACP] + H2O. The enzyme catalyses (3R)-hydroxydecanoyl-[ACP] = (2E)-decenoyl-[ACP] + H2O. It carries out the reaction (2E)-decenoyl-[ACP] = (3Z)-decenoyl-[ACP]. It functions in the pathway lipid metabolism; fatty acid biosynthesis. Functionally, necessary for the introduction of cis unsaturation into fatty acids. Catalyzes the dehydration of (3R)-3-hydroxydecanoyl-ACP to E-(2)-decenoyl-ACP and then its isomerization to Z-(3)-decenoyl-ACP. Can catalyze the dehydratase reaction for beta-hydroxyacyl-ACPs with saturated chain lengths up to 16:0, being most active on intermediate chain length. This is 3-hydroxydecanoyl-[acyl-carrier-protein] dehydratase from Methylobacillus flagellatus (strain ATCC 51484 / DSM 6875 / VKM B-1610 / KT).